The chain runs to 526 residues: Cytochrome P450 monooxygenase BOT4 (526 aa).

The N-linked (GlcNAc...) asparagine glycan is linked to Asn5. The chain crosses the membrane as a helical span at residues 41–61; sequence CLVAIILCRFIAVWSYNLWFH. Asn205 and Asn281 each carry an N-linked (GlcNAc...) asparagine glycan. Cys464 lines the heme pocket.

The protein belongs to the cytochrome P450 family. Heme serves as cofactor.

Its subcellular location is the membrane. Its pathway is secondary metabolite biosynthesis. In terms of biological role, cytochrome P450 monooxygenase; part of the gene cluster that mediates the biosynthesis of botrydial. Botrydial is necessary for colonization of plant tissue by the T4 strain. It is a strain-dependent virulence factor since highly aggressive strains like SAS56 or B05 still retain substantial virulence when botrydial synthesis is impaired, since they produce also botcinic acid. The first step of botrydial biosynthesis is performed by the sesquiterpene synthase BOT2 which catalyzes the cyclization of farnesyl diphosphate (FPP) to presilphiperfolan-8-beta-ol (PSP). The cytochrome P450 monooxygenase BOT4 then catalyzes the hydroxylation at C-4 to give a probotryane intermediate. Acetylation of the hydroxyl at C-4 is carried out by the acetyltransferase BOT5, followed by the combined action of the P450 monooxygenases BOT3 and BOT1, to yield finally the glycol, via the regio- and stereospecific hydroxylations at C-10 and C-15 of the probotryane intermediates, respectively. The cleavage of the C10-C15 bond of probotryane skeleton is an intriguing and chemically important reaction, which could be mediated by some of the monooxygenases or by a combination of them. It is possible that either BOT3 or BOT1 would oxidize either the 10- or the 15-hydroxy group to the hydroperoxide derivative, which would then undergo heterolytic fragmentation to give the dialdehyde botrydial. Finally, the dehydrogenase BOT7 might be involved in the conversion of botrydial to dihydrobotrydial. The chain is Cytochrome P450 monooxygenase BOT4 from Botryotinia fuckeliana (Noble rot fungus).